A 323-amino-acid chain; its full sequence is Putative CRISPR-associated protein SSO1401 (323 aa).

In terms of assembly, sometimes seen associated with the aCascade ribonucleoprotein complex, minimally composed of Csa2 and Cas5a, which binds crRNA. Other probable components of aCascade in strain P1 are Cas6 and Csa5, while SSO1399, Cas5b (SSO1400) and SSO1401 have sometimes been seen weakly associated. The Csa2-Cas5a-crRNA complex also binds target DNA homologous to crRNA, probably forming an R-loop. Purified aCascade forms a filament about 6 nm in width.

Its function is as follows. CRISPR (clustered regularly interspaced short palindromic repeat) is an adaptive immune system that provides protection against mobile genetic elements (viruses, transposable elements and conjugative plasmids). CRISPR clusters contain spacers, sequences complementary to antecedent mobile elements, and target invading nucleic acids. CRISPR clusters are transcribed and processed into CRISPR RNA (crRNA). The sequence is that of Putative CRISPR-associated protein SSO1401 from Saccharolobus solfataricus (strain ATCC 35092 / DSM 1617 / JCM 11322 / P2) (Sulfolobus solfataricus).